The following is a 176-amino-acid chain: Peptide deformylase (176 aa).

Cys94 and His136 together coordinate Fe cation. Residue Glu137 is part of the active site. His140 is a Fe cation binding site.

The protein belongs to the polypeptide deformylase family. Fe(2+) is required as a cofactor.

It catalyses the reaction N-terminal N-formyl-L-methionyl-[peptide] + H2O = N-terminal L-methionyl-[peptide] + formate. Functionally, removes the formyl group from the N-terminal Met of newly synthesized proteins. Requires at least a dipeptide for an efficient rate of reaction. N-terminal L-methionine is a prerequisite for activity but the enzyme has broad specificity at other positions. This is Peptide deformylase from Bartonella quintana (strain Toulouse) (Rochalimaea quintana).